A 209-amino-acid chain; its full sequence is Uracil phosphoribosyltransferase (209 aa).

Residues arginine 79, arginine 104, and 131–139 contribute to the 5-phospho-alpha-D-ribose 1-diphosphate site; that span reads DPMLATGGS. Uracil contacts are provided by residues isoleucine 194 and 199–201; that span reads GDA. Aspartate 200 contacts 5-phospho-alpha-D-ribose 1-diphosphate.

It belongs to the UPRTase family. Mg(2+) serves as cofactor.

It carries out the reaction UMP + diphosphate = 5-phospho-alpha-D-ribose 1-diphosphate + uracil. The protein operates within pyrimidine metabolism; UMP biosynthesis via salvage pathway; UMP from uracil: step 1/1. With respect to regulation, allosterically activated by GTP. Its function is as follows. Catalyzes the conversion of uracil and 5-phospho-alpha-D-ribose 1-diphosphate (PRPP) to UMP and diphosphate. This Clostridioides difficile (strain 630) (Peptoclostridium difficile) protein is Uracil phosphoribosyltransferase.